The chain runs to 391 residues: Succinyl-diaminopimelate desuccinylase (391 aa).

Histidine 78 provides a ligand contact to Zn(2+). Aspartate 80 is a catalytic residue. Aspartate 111 contacts Zn(2+). The active-site Proton acceptor is the glutamate 145. 3 residues coordinate Zn(2+): glutamate 146, glutamate 174, and histidine 360.

The protein belongs to the peptidase M20A family. DapE subfamily. In terms of assembly, homodimer. It depends on Zn(2+) as a cofactor. Co(2+) is required as a cofactor.

It catalyses the reaction N-succinyl-(2S,6S)-2,6-diaminopimelate + H2O = (2S,6S)-2,6-diaminopimelate + succinate. The protein operates within amino-acid biosynthesis; L-lysine biosynthesis via DAP pathway; LL-2,6-diaminopimelate from (S)-tetrahydrodipicolinate (succinylase route): step 3/3. Catalyzes the hydrolysis of N-succinyl-L,L-diaminopimelic acid (SDAP), forming succinate and LL-2,6-diaminopimelate (DAP), an intermediate involved in the bacterial biosynthesis of lysine and meso-diaminopimelic acid, an essential component of bacterial cell walls. The protein is Succinyl-diaminopimelate desuccinylase of Acidovorax ebreus (strain TPSY) (Diaphorobacter sp. (strain TPSY)).